The chain runs to 220 residues: Uracil-DNA glycosylase (220 aa).

Asp65 serves as the catalytic Proton acceptor.

Belongs to the uracil-DNA glycosylase (UDG) superfamily. UNG family.

The protein resides in the cytoplasm. It catalyses the reaction Hydrolyzes single-stranded DNA or mismatched double-stranded DNA and polynucleotides, releasing free uracil.. Excises uracil residues from the DNA which can arise as a result of misincorporation of dUMP residues by DNA polymerase or due to deamination of cytosine. This chain is Uracil-DNA glycosylase, found in Amoebophilus asiaticus (strain 5a2).